Consider the following 78-residue polypeptide: Large ribosomal subunit protein bL28 (78 aa).

The segment at 1–23 is disordered; it reads MSRVCQVSGKRVQTGNNVSHANN. A compositionally biased stretch (polar residues) spans 11-22; that stretch reads RVQTGNNVSHAN.

Belongs to the bacterial ribosomal protein bL28 family.

This Xanthomonas campestris pv. campestris (strain 8004) protein is Large ribosomal subunit protein bL28.